Here is a 316-residue protein sequence, read N- to C-terminus: Beta-ketoacyl-[acyl-carrier-protein] synthase III (316 aa).

Catalysis depends on residues cysteine 112 and histidine 243. The segment at 244-248 (QANLR) is ACP-binding. Asparagine 273 is a catalytic residue.

The protein belongs to the thiolase-like superfamily. FabH family. In terms of assembly, homodimer.

It localises to the cytoplasm. It carries out the reaction malonyl-[ACP] + acetyl-CoA + H(+) = 3-oxobutanoyl-[ACP] + CO2 + CoA. It participates in lipid metabolism; fatty acid biosynthesis. Its function is as follows. Catalyzes the condensation reaction of fatty acid synthesis by the addition to an acyl acceptor of two carbons from malonyl-ACP. Catalyzes the first condensation reaction which initiates fatty acid synthesis and may therefore play a role in governing the total rate of fatty acid production. Possesses both acetoacetyl-ACP synthase and acetyl transacylase activities. Its substrate specificity determines the biosynthesis of branched-chain and/or straight-chain of fatty acids. The sequence is that of Beta-ketoacyl-[acyl-carrier-protein] synthase III from Haemophilus influenzae (strain 86-028NP).